We begin with the raw amino-acid sequence, 426 residues long: Actin-like protein 6B (426 aa).

The tract at residues 39 to 82 is essential for mediating its function in dendritic development; may contribute to neuronal-specific targeting; that stretch reads TTVGLLAAEEGGGLELEGEKEKKGKIFHIDTNALHVPRDGAEVM.

The protein belongs to the actin family. In terms of assembly, component of the multiprotein chromatin-remodeling complexes SWI/SNF: SWI/SNF-A (BAF), SWI/SNF-B (PBAF) and related complexes. The canonical complex contains a catalytic subunit (either SMARCA4/BRG1/BAF190A or SMARCA2/BRM/BAF190B) and at least SMARCE1, ACTL6A/BAF53, SMARCC1/BAF155, SMARCC2/BAF170, and SMARCB1/SNF5/BAF47. Other subunits specific to each of the complexes may also be present permitting several possible combinations developmentally and tissue specific. Component of the BAF complex, which includes at least actin (ACTB), ARID1A/BAF250A, ARID1B/BAF250B, SMARCA2/BRM, SMARCA4/BRG1/BAF190A, ACTL6A/BAF53, ACTL6B/BAF53B, SMARCE1/BAF57, SMARCC1/BAF155, SMARCC2/BAF170, SMARCB1/SNF5/INI1, and one or more SMARCD1/BAF60A, SMARCD2/BAF60B, or SMARCD3/BAF60C. Component of neuron-specific chromatin remodeling complex (nBAF complex) composed of at least, ARID1A/BAF250A or ARID1B/BAF250B, SMARCD1/BAF60A or SMARCD2/BAF60B or SMARCD3/BAF60C, SMARCA2/BRM/BAF190B, SMARCA4/BRG1/BAF190A, SMARCB1/BAF47, SMARCC1/BAF155, SMARCE1/BAF57, SMARCC2/BAF170, DPF1/BAF45B, DPF3/BAF45C, ACTL6B/BAF53B and actin (ACTB). Note that the nBAF complex is polymorphic in regard to the ATPase, SMARCA2 and SMARCA4 occupying mutually exclusive positions. May be a component of the SWI/SNF-B (PBAF) chromatin remodeling complex, at least composed of SMARCA4/BRG1, SMARCB1/BAF47/SNF5, ACTL6A/BAF53A or ACTL6B/BAF53B, SMARCE1/BAF57, SMARCD1/BAF60A, SMARCD2/BAF60B, perhaps SMARCD3/BAF60C, SMARCC1/BAF155, SMARCC2/BAF170, PBRM1/BAF180, ARID2/BAF200 and actin.

Its subcellular location is the nucleus. Functionally, involved in transcriptional activation and repression of select genes by chromatin remodeling (alteration of DNA-nucleosome topology). Component of SWI/SNF chromatin remodeling complexes that carry out key enzymatic activities, changing chromatin structure by altering DNA-histone contacts within a nucleosome in an ATP-dependent manner. Belongs to the neuron-specific chromatin remodeling complex (nBAF complex), as such plays a role in remodeling mononucleosomes in an ATP-dependent fashion, and is required for postmitotic neural development and dendritic outgrowth. During neural development a switch from a stem/progenitor to a postmitotic chromatin remodeling mechanism occurs as neurons exit the cell cycle and become committed to their adult state. The transition from proliferating neural stem/progenitor cells to postmitotic neurons requires a switch in subunit composition of the npBAF and nBAF complexes. As neural progenitors exit mitosis and differentiate into neurons, npBAF complexes which contain ACTL6A/BAF53A and PHF10/BAF45A, are exchanged for homologous alternative ACTL6B/BAF53B and DPF1/BAF45B or DPF3/BAF45C subunits in neuron-specific complexes (nBAF). The npBAF complex is essential for the self-renewal/proliferative capacity of the multipotent neural stem cells. The nBAF complex along with CREST plays a role regulating the activity of genes essential for dendrite growth. ACTL6B/BAF53B is not essential for assembly of the nBAF complex but is required for targeting the complex and CREST to the promoter of genes essential for dendritic growth. Essential for neuronal maturation and dendrite development. This chain is Actin-like protein 6B (ACTL6B), found in Bos taurus (Bovine).